A 1579-amino-acid chain; its full sequence is Pentafunctional AROM polypeptide (1579 aa).

A 3-dehydroquinate synthase region spans residues 1–383; that stretch reads MLVKVPILGR…YGKSAHVVSD (383 aa). NAD(+)-binding positions include 40–42, 75–78, 106–108, and Asp-111; these read DSN, EANK, and GGI. Residue Arg-122 coordinates 7-phospho-2-dehydro-3-deoxy-D-arabino-heptonate. An NAD(+)-binding site is contributed by 131–132; that stretch reads TS. 7-phospho-2-dehydro-3-deoxy-D-arabino-heptonate contacts are provided by Asp-138 and Lys-144. Residue Lys-153 coordinates NAD(+). Asn-154 contacts 7-phospho-2-dehydro-3-deoxy-D-arabino-heptonate. NAD(+) is bound by residues 171-174 and Asn-182; that span reads WLQS. Residue Glu-186 coordinates Zn(2+). Residues 186–189 and Lys-249 contribute to the 7-phospho-2-dehydro-3-deoxy-D-arabino-heptonate site; that span reads EVIK. Glu-259 serves as the catalytic Proton acceptor; for 3-dehydroquinate synthase activity. 7-phospho-2-dehydro-3-deoxy-D-arabino-heptonate-binding positions include 263-267 and His-270; that span reads RNLLN. His-270 lines the Zn(2+) pocket. Catalysis depends on His-274, which acts as the Proton acceptor; for 3-dehydroquinate synthase activity. 7-phospho-2-dehydro-3-deoxy-D-arabino-heptonate is bound by residues His-286 and Lys-355. His-286 provides a ligand contact to Zn(2+). Residues 396-862 are EPSP synthase; sequence VYPFNNIPRD…WDVLHTELGA (467 aa). Cys-844 functions as the For EPSP synthase activity in the catalytic mechanism. The shikimate kinase stretch occupies residues 881 to 1071; it reads SVVIIGMRAA…IPTRRSAFVC (191 aa). 886 to 893 contributes to the ATP binding site; sequence GMRAAGKT. Residues 1072–1284 form a 3-dehydroquinase region; it reads LTFENLTEYT…AAPGQLTVAE (213 aa). His-1189 acts as the Proton acceptor; for 3-dehydroquinate dehydratase activity in catalysis. Catalysis depends on Lys-1218, which acts as the Schiff-base intermediate with substrate; for 3-dehydroquinate dehydratase activity. Residues 1297-1579 are shikimate dehydrogenase; that stretch reads KKDFFVVGSP…KAIYDAVTEI (283 aa).

This sequence in the N-terminal section; belongs to the sugar phosphate cyclases superfamily. Dehydroquinate synthase family. It in the 2nd section; belongs to the EPSP synthase family. The protein in the 3rd section; belongs to the shikimate kinase family. In the 4th section; belongs to the type-I 3-dehydroquinase family. This sequence in the C-terminal section; belongs to the shikimate dehydrogenase family. Homodimer. It depends on Zn(2+) as a cofactor.

It is found in the cytoplasm. It carries out the reaction 7-phospho-2-dehydro-3-deoxy-D-arabino-heptonate = 3-dehydroquinate + phosphate. The enzyme catalyses 3-dehydroquinate = 3-dehydroshikimate + H2O. The catalysed reaction is shikimate + NADP(+) = 3-dehydroshikimate + NADPH + H(+). It catalyses the reaction shikimate + ATP = 3-phosphoshikimate + ADP + H(+). It carries out the reaction 3-phosphoshikimate + phosphoenolpyruvate = 5-O-(1-carboxyvinyl)-3-phosphoshikimate + phosphate. It participates in metabolic intermediate biosynthesis; chorismate biosynthesis; chorismate from D-erythrose 4-phosphate and phosphoenolpyruvate: step 2/7. Its pathway is metabolic intermediate biosynthesis; chorismate biosynthesis; chorismate from D-erythrose 4-phosphate and phosphoenolpyruvate: step 3/7. The protein operates within metabolic intermediate biosynthesis; chorismate biosynthesis; chorismate from D-erythrose 4-phosphate and phosphoenolpyruvate: step 4/7. It functions in the pathway metabolic intermediate biosynthesis; chorismate biosynthesis; chorismate from D-erythrose 4-phosphate and phosphoenolpyruvate: step 5/7. It participates in metabolic intermediate biosynthesis; chorismate biosynthesis; chorismate from D-erythrose 4-phosphate and phosphoenolpyruvate: step 6/7. The AROM polypeptide catalyzes 5 consecutive enzymatic reactions in prechorismate polyaromatic amino acid biosynthesis. The sequence is that of Pentafunctional AROM polypeptide from Candida glabrata (strain ATCC 2001 / BCRC 20586 / JCM 3761 / NBRC 0622 / NRRL Y-65 / CBS 138) (Yeast).